A 420-amino-acid polypeptide reads, in one-letter code: Tyrosine--tRNA ligase (420 aa).

Residue Tyr33 participates in L-tyrosine binding. Residues 38–47 carry the 'HIGH' region motif; the sequence is PTGPSLHAGH. L-tyrosine contacts are provided by Tyr167 and Gln171. Positions 227 to 231 match the 'KMSKS' region motif; that stretch reads KFGKS. Lys230 provides a ligand contact to ATP. The 67-residue stretch at 352–418 folds into the S4 RNA-binding domain; sequence RTIIDLLVAS…GKKNFAGVQI (67 aa).

Belongs to the class-I aminoacyl-tRNA synthetase family. TyrS type 1 subfamily. As to quaternary structure, homodimer.

The protein localises to the cytoplasm. It catalyses the reaction tRNA(Tyr) + L-tyrosine + ATP = L-tyrosyl-tRNA(Tyr) + AMP + diphosphate + H(+). Catalyzes the attachment of tyrosine to tRNA(Tyr) in a two-step reaction: tyrosine is first activated by ATP to form Tyr-AMP and then transferred to the acceptor end of tRNA(Tyr). In Corynebacterium glutamicum (strain ATCC 13032 / DSM 20300 / JCM 1318 / BCRC 11384 / CCUG 27702 / LMG 3730 / NBRC 12168 / NCIMB 10025 / NRRL B-2784 / 534), this protein is Tyrosine--tRNA ligase.